The chain runs to 396 residues: S-arrestin (396 aa).

It belongs to the arrestin family.

Arrestin is one of the major proteins of the ros (retinal rod outer segments); it binds to photoactivated-phosphorylated rhodopsin, thereby apparently preventing the transducin-mediated activation of phosphodiesterase. In Aquarana catesbeiana (American bullfrog), this protein is S-arrestin.